Consider the following 834-residue polypeptide: MAP kinase phosphatase with leucine-rich repeats protein 1 (834 aa).

Residues 1 to 103 (MIFKKLFSKG…GSGTTKESKK (103 aa)) are disordered. Positions 36–78 (GSGTNTNGLSNSTTNPSSIHSTPTTPTTTASTNLTNSNKLSTL) are enriched in low complexity. Positions 79-98 (APITNGNRSLRGSKDGSGTT) are enriched in polar residues. LRR repeat units follow at residues 160–181 (ELRSLILDFNKITEIPEQIGLL), 183–204 (NLKHLSLAANQLSQVPEFLSQL), 206–226 (SLESLELGINQFTSFPLNICK), 229–251 (SLTLLRLETNNIKSLPDDFINLE), 252–273 (NLKDLSLLDNQLKEIPDSLPNN), 274–292 (IEKLNLGCNDIINSYSKSL), 298–319 (SLTTLNLSENKIEVLDESLSCL), 321–342 (NVKTLILDCNMIKVIPGSVLGS), 345–366 (SLVTLNLPHNFISDLPAEIVTL), and 368–389 (NLRIIDLRGNNFEFCKNYPSSE). The tract at residues 503–584 (YEKQENDENN…ENPLKESQGK (82 aa)) is disordered. Over residues 511–536 (NNSVTLETTTTISIASDNTDEASIQI) the composition is skewed to polar residues. Composition is skewed to basic and acidic residues over residues 538-554 (QKEDGDKENLENDDKLL) and 569-582 (KQQEQQENPLKESQ). Residues 555–615 (QESFSENNNN…IRLEKIKYQE (61 aa)) are a coiled coil. Residues 695–834 (VPDLIIDKLY…LKKFEKDLSK (140 aa)) enclose the Tyrosine-protein phosphatase domain. C778 (phosphocysteine intermediate) is an active-site residue.

The protein belongs to the protein-tyrosine phosphatase family. Non-receptor class dual specificity subfamily.

It catalyses the reaction O-phospho-L-tyrosyl-[protein] + H2O = L-tyrosyl-[protein] + phosphate. The catalysed reaction is O-phospho-L-seryl-[protein] + H2O = L-seryl-[protein] + phosphate. The enzyme catalyses O-phospho-L-threonyl-[protein] + H2O = L-threonyl-[protein] + phosphate. Probable phosphatase with dual specificity toward Ser/Thr and Tyr-containing proteins. Dephosphorylates pNPP, in vitro. Essential for proper regulation of erkB (erk2) and optimal motility during development. This is MAP kinase phosphatase with leucine-rich repeats protein 1 (mpl1) from Dictyostelium discoideum (Social amoeba).